The primary structure comprises 80 residues: Dermaseptin-DA3 (80 aa).

A signal peptide spans 1 to 22 (MAFLKKSLFLVLFLGLVSLSIC). Residues 23–42 (EEKRENEDEEEQEDDEQSEE) constitute a propeptide that is removed on maturation. Residues 24–48 (EKRENEDEEEQEDDEQSEEKRGMWS) form a disordered region. The segment covering 29 to 40 (EDEEEQEDDEQS) has biased composition (acidic residues). Leu77 is modified (leucine amide). Positions 79 to 80 (EQ) are excised as a propeptide.

This sequence belongs to the frog skin active peptide (FSAP) family. Dermaseptin subfamily. Expressed by the skin glands.

The protein localises to the secreted. Possesses a potent antimicrobial activity against Gram-positive and Gram-negative bacteria. Probably acts by disturbing membrane functions with its amphipathic structure. The sequence is that of Dermaseptin-DA3 from Agalychnis dacnicolor (Giant Mexican leaf frog).